A 134-amino-acid chain; its full sequence is Ribosome-binding factor A (134 aa).

It belongs to the RbfA family. Monomer. Binds 30S ribosomal subunits, but not 50S ribosomal subunits or 70S ribosomes.

The protein resides in the cytoplasm. Its function is as follows. One of several proteins that assist in the late maturation steps of the functional core of the 30S ribosomal subunit. Associates with free 30S ribosomal subunits (but not with 30S subunits that are part of 70S ribosomes or polysomes). Required for efficient processing of 16S rRNA. May interact with the 5'-terminal helix region of 16S rRNA. In Baumannia cicadellinicola subsp. Homalodisca coagulata, this protein is Ribosome-binding factor A.